The sequence spans 2550 residues: Highly reducing polyketide synthase otaA (2550 aa).

The Ketosynthase family 3 (KS3) domain occupies 9–431; the sequence is SEPLAIIGLA…GTNAHAVVED (423 aa). Catalysis depends on for beta-ketoacyl synthase activity residues Cys182, His317, and His355. The segment at 572–894 is malonyl-CoA:ACP transacylase (MAT) domain; that stretch reads FVFTGQGANW…KRYETNGSTI (323 aa). Positions 959–1094 are N-terminal hotdog fold; sequence HELLGVPVED…GSVRAETGPP (136 aa). Positions 959 to 1252 are dehydratase (DH) domain; sequence HELLGVPVED…DLVQLPANND (294 aa). The region spanning 959 to 1253 is the PKS/mFAS DH domain; that stretch reads HELLGVPVED…LVQLPANNDD (295 aa). Positions 1107 to 1253 are C-terminal hotdog fold; sequence AEPVDIAQMY…LVQLPANNDD (147 aa). Residues Ile1420 and Glu1442 each contribute to the S-adenosyl-L-methionine site. Residues 1433–1612 are methyltransferase (CMeT) domain; it reads HAQTGIKILE…GLRPRLIIND (180 aa). Positions 1859 to 1919 are enoyl reductase (ER) (ER) domain; the sequence is PDEVKIRIHA…DQVMALRTGP (61 aa). A ketoreductase (KR) domain region spans residues 2166–2345; the sequence is ASYLLIGGFG…PATSVSLGSV (180 aa). Positions 2454–2531 constitute a Carrier domain; it reads AAVEVVTRAI…QLAQQAADAS (78 aa). Ser2491 is subject to O-(pantetheine 4'-phosphoryl)serine.

Requires pantetheine 4'-phosphate as cofactor.

The enzyme catalyses 4 malonyl-CoA + acetyl-CoA + 5 NADPH + 9 H(+) = 7-methylmellein + 3 CO2 + 5 NADP(+) + 5 CoA + 4 H2O. Its pathway is mycotoxin biosynthesis. In terms of biological role, highly reducing polyketide synthase; part of the gene cluster that mediates the biosynthesis of ochratoxin A (OTA), a mycotoxin composed of a chlorinated type I polyketide dihydroisocoumarin moiety linked to L-phenylalanine, and demonstrated to have nephrotoxic, immunotoxic, genotoxic, neurotoxic, and teratogenic properties. OtaA catalyzes the condensation of one acetate and 4 malonate units to form the isocoumarin group. The pathway begins with the highly reducing polyketide synthase otaA that catalyzes the formation of the isocoumarin group during the initial stages of biosynthesis, starting from one acetate and 4 malonate units, to originate the characteristic pentaketide skeleton 7-methylmellein (7-MM) of the OTA molecule. The newly identified cyclase otaY might be involved in the polyketide cyclization reaction during the initial steps of the OTA biosynthesis. 7-MM is then oxidized into 7-carboxymellein (also called ochratoxin beta) by the cytochrome P450 monooxygenase otaC. The NRPS encoded by the otaB gene is involved in the linking of phenylalanine to the dihydroisocoumarin ring. The reaction catalyzed by NRPS results in the production of ochratoxin B (OTB), which is the non-chlorinated analog of OTA and which subsequently serves as the substrate of the halogenase otaD for chlorination activity to form the final molecular structure of OTA, containing a chlorine atom in the C-5 position of the molecule. The sequence is that of Highly reducing polyketide synthase otaA from Aspergillus niger (strain ATCC MYA-4892 / CBS 513.88 / FGSC A1513).